The following is a 667-amino-acid chain: Probable potassium transport system protein Kup (667 aa).

Transmembrane regions (helical) follow at residues 16–36, 58–78, 101–121, 146–166, 167–187, 221–241, 253–273, 294–314, 343–363, 373–393, 399–419, and 424–444; these read GFIIALGIVYGDIGTSPLYTM, VSLIIWTLTLVTTIKYVLIAL, WLIIPAMLGGATLLSDGALTP, TNVILTTLLILMVLFGLQRFG, TGVIGKLFGPVMLVWFSVLGI, IFILGSIFLATTGAEALYSDL, WPFVKVCIILSYCGQAAWILA, VYLVILATLAAIIASQALISG, LYIPVINWSLFAVTSCTVLYF, YGLAITITMLMTTILLAYYLI, PLLASLLMAFFAFIEFIFFLA, and FMHGGYVVVVLALAIVFVMVI.

It belongs to the HAK/KUP transporter (TC 2.A.72) family.

Its subcellular location is the cell membrane. The catalysed reaction is K(+)(in) + H(+)(in) = K(+)(out) + H(+)(out). Its function is as follows. Transport of potassium into the cell. Likely operates as a K(+):H(+) symporter. This is Probable potassium transport system protein Kup from Streptococcus equi subsp. equi (strain 4047).